We begin with the raw amino-acid sequence, 226 residues long: Ribonuclease 3 (226 aa).

Positions 7–129 (LPRLCRTLGY…IIGAVYLDAD (123 aa)) constitute an RNase III domain. Residue Glu42 coordinates Mg(2+). Residue Asp46 is part of the active site. The Mg(2+) site is built by Asp115 and Glu118. Glu118 is an active-site residue. Residues 156–226 (DAKTLLQEYL…AAQVLELLNQ (71 aa)) enclose the DRBM domain.

The protein belongs to the ribonuclease III family. In terms of assembly, homodimer. The cofactor is Mg(2+).

Its subcellular location is the cytoplasm. The enzyme catalyses Endonucleolytic cleavage to 5'-phosphomonoester.. Digests double-stranded RNA. Involved in the processing of primary rRNA transcript to yield the immediate precursors to the large and small rRNAs (23S and 16S). Processes some mRNAs, and tRNAs when they are encoded in the rRNA operon. Processes pre-crRNA and tracrRNA of type II CRISPR loci if present in the organism. The chain is Ribonuclease 3 from Shewanella amazonensis (strain ATCC BAA-1098 / SB2B).